The primary structure comprises 210 residues: Small ribosomal subunit protein uS4 (210 aa).

In terms of domain architecture, S4 RNA-binding spans 99–170 (RRLDNAVFRA…NLEAVVRRGV (72 aa)).

The protein belongs to the universal ribosomal protein uS4 family. As to quaternary structure, part of the 30S ribosomal subunit. Contacts protein S5. The interaction surface between S4 and S5 is involved in control of translational fidelity.

Functionally, one of the primary rRNA binding proteins, it binds directly to 16S rRNA where it nucleates assembly of the body of the 30S subunit. In terms of biological role, with S5 and S12 plays an important role in translational accuracy. The sequence is that of Small ribosomal subunit protein uS4 from Desulfotalea psychrophila (strain LSv54 / DSM 12343).